We begin with the raw amino-acid sequence, 88 residues long: Beta-defensin 115 (88 aa).

An N-terminal signal peptide occupies residues 1–27; that stretch reads MLPDHFSPLSGDIKLSVLALVVLVVLA. Disulfide bonds link cysteine 38–cysteine 65, cysteine 45–cysteine 59, and cysteine 49–cysteine 66.

The protein belongs to the beta-defensin family.

The protein resides in the secreted. Its function is as follows. Has antibacterial activity. The protein is Beta-defensin 115 (DEFB115) of Homo sapiens (Human).